The chain runs to 325 residues: Solute carrier family 35 member B1 (325 aa).

8 helical membrane passes run 18–38, 54–74, 88–108, 139–159, 171–191, 213–233, 246–266, and 288–308; these read PVCF…QESI, FALS…KLLI, WLYA…NSAL, YPLA…LFMY, IFGY…LTGV, LWST…WEFL, ILLF…TVVY, and VILF…LVFL. Residues 321-325 carry the Di-lysine motif motif; it reads KKTSH.

This sequence belongs to the nucleotide-sugar transporter family. SLC35B subfamily.

It localises to the endoplasmic reticulum membrane. Functionally, probable sugar transporter. This Gallus gallus (Chicken) protein is Solute carrier family 35 member B1 (SLC35B1).